Reading from the N-terminus, the 338-residue chain is Fructose-1,6-bisphosphatase 1 (338 aa).

The residue at position 2 (A2) is an N-acetylalanine. AMP contacts are provided by residues V18–G22 and T28–T32. 2 residues coordinate Mg(2+): D69 and E98. K113 to Y114 is a binding site for AMP. Mg(2+) is bound by residues D119, L121, and D122. D122–S125 lines the substrate pocket. Residue R141 coordinates AMP. Position 151 is an N6-succinyllysine (K151). Residues N213–Y216, R244–M249, Y265, and K275–R277 contribute to the substrate site. Phosphotyrosine is present on residues Y216, Y245, and Y265. A Mg(2+)-binding site is contributed by E281.

The protein belongs to the FBPase class 1 family. As to quaternary structure, homotetramer. It depends on Mg(2+) as a cofactor.

It catalyses the reaction beta-D-fructose 1,6-bisphosphate + H2O = beta-D-fructose 6-phosphate + phosphate. It functions in the pathway carbohydrate biosynthesis; gluconeogenesis. Subject to complex allosteric regulation. The enzyme can assume an active R-state, or an inactive T-state. Intermediate conformations may exist. AMP acts as an allosteric inhibitor. AMP binding affects the turnover of bound substrate and not the affinity for substrate. Fructose 2,6-bisphosphate acts as a competitive inhibitor. Fructose 2,6-bisphosphate and AMP have synergistic effects. Functionally, catalyzes the hydrolysis of fructose 1,6-bisphosphate to fructose 6-phosphate in the presence of divalent cations, acting as a rate-limiting enzyme in gluconeogenesis. Plays a role in regulating glucose sensing and insulin secretion of pancreatic beta-cells. Appears to modulate glycerol gluconeogenesis in liver. Important regulator of appetite and adiposity; increased expression of the protein in liver after nutrient excess increases circulating satiety hormones and reduces appetite-stimulating neuropeptides and thus seems to provide a feedback mechanism to limit weight gain. The polypeptide is Fructose-1,6-bisphosphatase 1 (FBP1) (Oryctolagus cuniculus (Rabbit)).